The sequence spans 337 residues: Glucose transporter 2C (337 aa).

The disordered stretch occupies residues 1 to 22; it reads MTERRDNVSHAPDAIEGPNDGA. Over 1–43 the chain is Cytoplasmic; that stretch reads MTERRDNVSHAPDAIEGPNDGAHAEDTSPGFFSLENLGVAQVQ. A helical membrane pass occupies residues 44 to 64; that stretch reads VVGGTLNGFSIGFVAVYILLY. At 65-119 the chain is on the extracellular side; sequence EVATNCSLFKTTEACKAVGSYGCEWKDTEVCSWKKECDSDSDGVNPCESLIGYSS. Asparagine 69 is a glycosylation site (N-linked (GlcNAc...) asparagine). The helical transmembrane segment at 120-140 threads the bilayer; that stretch reads LYSGIFASAMIVGSMVGSIIA. Over 141–152 the chain is Cytoplasmic; sequence GKCITMFGLKKS. Residues 153–173 traverse the membrane as a helical segment; the sequence is FIIVGVMSVVASALNHISVAT. Topologically, residues 174–175 are extracellular; sequence NE. The helical transmembrane segment at 176–196 threads the bilayer; sequence FWVLCAGRVLMGIGLGVVCVI. Residues 197–214 are Cytoplasmic-facing; the sequence is CPMYVNENAHPKLSKVDG. A helical transmembrane segment spans residues 215 to 235; sequence VLFQVFITFGIMLAAMLGLIL. Topologically, residues 236–250 are extracellular; it reads DKTVNYDNDPDMAGR. The helical transmembrane segment at 251–271 threads the bilayer; that stretch reads FHGFCAVSSVLSVAMFLVGMF. Over 272–300 the chain is Cytoplasmic; that stretch reads LRESTATFSQDDDGKADGGMDPNEYGWGQ. A helical transmembrane segment spans residues 301-321; that stretch reads MLWPLFMGAVTAGTLQLTGIN. The Extracellular portion of the chain corresponds to 322 to 337; the sequence is AVMNYAPKITENLGMD.

Belongs to the major facilitator superfamily. Sugar transporter (TC 2.A.1.1) family.

It is found in the membrane. In terms of biological role, facilitative glucose transporter. This Trypanosoma brucei brucei protein is Glucose transporter 2C (THT2C).